We begin with the raw amino-acid sequence, 352 residues long: Putative GATA transcription factor 22 (352 aa).

Residues 27 to 53 (SLHHHLQQQQQQQQHFHHQASSNPSSL) are disordered. The span at 33-53 (QQQQQQQQHFHHQASSNPSSL) shows a compositional bias: low complexity. A Nuclear localization signal motif is present at residues 112-119 (PKKETRLK). Residues 163 to 189 (AIITTSDSSKQHTNNDQSSNLSNSERQ) are disordered. Positions 165–189 (ITTSDSSKQHTNNDQSSNLSNSERQ) are enriched in polar residues. A GATA-type zinc finger spans residues 195–249 (DCVIRICSDCNTTKTPLWRSGPRGPKSLCNACGIRQRKARRAAMATATATAVSGV).

It belongs to the type IV zinc-finger family. Class B subfamily. As to quaternary structure, forms heterodimers with GATA18. As to expression, expressed predominantly in leaves, and barely in stems, flowers and siliques.

The protein localises to the nucleus. Its function is as follows. Transcriptional regulator that specifically binds 5'-GATA-3' or 5'-GAT-3' motifs within gene promoters. Involved in the modulation of chloroplast development, growth and division in a cytokinin-dependent manner. Repressor of the gibberellic acid (GA) signaling pathway that regulates flowering and modulates greening, in a SOC1-dependent manner. Prevents the accumulation of SOC1 during flowering. Promotes chlorophyll biosynthesis throughout the plant, by regulating chlorophyll biosynthetic genes (e.g. HEMA1 and GUN4) and chloroplast localized glutamate synthase (e.g. GLU1). Involved in the regulation of sugar-sensing genes (e.g. HXK1, HXK2, STP13 and PLT6). Regulator of germination, senescence, elongation growth and flowering time. Influences also leaf starch content. In Arabidopsis thaliana (Mouse-ear cress), this protein is Putative GATA transcription factor 22.